A 164-amino-acid chain; its full sequence is S-ribosylhomocysteine lyase (164 aa).

Residues His61, His65, and Cys131 each contribute to the Fe cation site.

This sequence belongs to the LuxS family. As to quaternary structure, homodimer. Fe cation serves as cofactor.

The catalysed reaction is S-(5-deoxy-D-ribos-5-yl)-L-homocysteine = (S)-4,5-dihydroxypentane-2,3-dione + L-homocysteine. In terms of biological role, involved in the synthesis of autoinducer 2 (AI-2) which is secreted by bacteria and is used to communicate both the cell density and the metabolic potential of the environment. The regulation of gene expression in response to changes in cell density is called quorum sensing. Catalyzes the transformation of S-ribosylhomocysteine (RHC) to homocysteine (HC) and 4,5-dihydroxy-2,3-pentadione (DPD). The protein is S-ribosylhomocysteine lyase of Bifidobacterium longum (strain DJO10A).